We begin with the raw amino-acid sequence, 93 residues long: MARSLKKGPFVADHLLKKIEFLNVKKEKKVITTWSRGSTILPIMIGHTIAVHNGREHLPIFITDQMVGHKLGEFSPTRTFRGHTKSDKKSRRP.

The segment at 73-93 is disordered; the sequence is EFSPTRTFRGHTKSDKKSRRP. Basic residues predominate over residues 80 to 93; sequence FRGHTKSDKKSRRP.

It belongs to the universal ribosomal protein uS19 family.

The protein localises to the plastid. It is found in the chloroplast. Functionally, protein S19 forms a complex with S13 that binds strongly to the 16S ribosomal RNA. The polypeptide is Small ribosomal subunit protein uS19c (rps19) (Mesostigma viride (Green alga)).